Consider the following 208-residue polypeptide: Potassium-transporting ATPase KdpC subunit (208 aa).

A helical transmembrane segment spans residues 6 to 26 (PALLVSIVLLVVCGLVYPLVL).

Belongs to the KdpC family. The system is composed of three essential subunits: KdpA, KdpB and KdpC.

It is found in the cell membrane. In terms of biological role, part of the high-affinity ATP-driven potassium transport (or Kdp) system, which catalyzes the hydrolysis of ATP coupled with the electrogenic transport of potassium into the cytoplasm. This subunit acts as a catalytic chaperone that increases the ATP-binding affinity of the ATP-hydrolyzing subunit KdpB by the formation of a transient KdpB/KdpC/ATP ternary complex. The protein is Potassium-transporting ATPase KdpC subunit of Clostridioides difficile (strain 630) (Peptoclostridium difficile).